The sequence spans 169 residues: uncharacterized protein (169 aa).

An N-terminal signal peptide occupies residues Met1–Ala21.

Component of the acid-soluble and acid-insoluble organic matrix of calcified shell layers (at protein level).

It localises to the secreted. This is an uncharacterized protein from Haliotis asinina (Donkey's ear abalone).